A 223-amino-acid chain; its full sequence is Ribose-5-phosphate isomerase A (223 aa).

Substrate is bound by residues 32–35 (TGST), 85–88 (DGAD), and 98–101 (KGGG). The active-site Proton acceptor is the glutamate 107. Lysine 125 contacts substrate.

It belongs to the ribose 5-phosphate isomerase family. As to quaternary structure, homodimer.

It carries out the reaction aldehydo-D-ribose 5-phosphate = D-ribulose 5-phosphate. It functions in the pathway carbohydrate degradation; pentose phosphate pathway; D-ribose 5-phosphate from D-ribulose 5-phosphate (non-oxidative stage): step 1/1. Its function is as follows. Catalyzes the reversible conversion of ribose-5-phosphate to ribulose 5-phosphate. The protein is Ribose-5-phosphate isomerase A of Pseudomonas paraeruginosa (strain DSM 24068 / PA7) (Pseudomonas aeruginosa (strain PA7)).